An 860-amino-acid chain; its full sequence is Alanine--tRNA ligase (860 aa).

H553, H557, C655, and H659 together coordinate Zn(2+).

This sequence belongs to the class-II aminoacyl-tRNA synthetase family. Zn(2+) is required as a cofactor.

Its subcellular location is the cytoplasm. The enzyme catalyses tRNA(Ala) + L-alanine + ATP = L-alanyl-tRNA(Ala) + AMP + diphosphate. Functionally, catalyzes the attachment of alanine to tRNA(Ala) in a two-step reaction: alanine is first activated by ATP to form Ala-AMP and then transferred to the acceptor end of tRNA(Ala). Also edits incorrectly charged Ser-tRNA(Ala) and Gly-tRNA(Ala) via its editing domain. The protein is Alanine--tRNA ligase of Legionella pneumophila (strain Corby).